A 305-amino-acid chain; its full sequence is Methionyl-tRNA formyltransferase (305 aa).

(6S)-5,6,7,8-tetrahydrofolate is bound at residue 109–112 (SLLP).

It belongs to the Fmt family.

It catalyses the reaction L-methionyl-tRNA(fMet) + (6R)-10-formyltetrahydrofolate = N-formyl-L-methionyl-tRNA(fMet) + (6S)-5,6,7,8-tetrahydrofolate + H(+). In terms of biological role, attaches a formyl group to the free amino group of methionyl-tRNA(fMet). The formyl group appears to play a dual role in the initiator identity of N-formylmethionyl-tRNA by promoting its recognition by IF2 and preventing the misappropriation of this tRNA by the elongation apparatus. In Paramagnetospirillum magneticum (strain ATCC 700264 / AMB-1) (Magnetospirillum magneticum), this protein is Methionyl-tRNA formyltransferase.